The sequence spans 575 residues: Protein AUXIN SIGNALING F-BOX 2 (575 aa).

In terms of domain architecture, F-box spans 1–47 (MNYFPDEVIEHVFDFVTSHKDRNAISLVCKSWYKIERYSRQKVFIGN). 1D-myo-inositol hexakisphosphate is bound at residue Lys-69. Positions 76-77 (DF) are interaction with auxin-responsive proteins. 1D-myo-inositol hexakisphosphate-binding positions include 108–109 (KR) and Arg-340. The interval 343–348 (PSDLLG) is interaction with auxin-responsive proteins. 396-398 (RFR) lines the 1D-myo-inositol hexakisphosphate pocket. Residues 400 to 404 (CILEP) form an interaction with auxin-responsive proteins region. Residue Arg-431 participates in 1D-myo-inositol hexakisphosphate binding. Residues 459–460 (AF) are interaction with auxin-responsive proteins. Residues 479–480 (KK) and Arg-504 contribute to the 1D-myo-inositol hexakisphosphate site.

Part of a SCF (SKP1-cullin-F-box) protein ligase complex. Interacts with Aux/IAA proteins (IAA7) in an auxin-dependent manner. In terms of tissue distribution, ubiquitous, with higher levels in seedlings.

It localises to the nucleus. Its pathway is protein modification; protein ubiquitination. Component of SCF(ASK-cullin-F-box) E3 ubiquitin ligase complexes, which may mediate the ubiquitination and subsequent proteasomal degradation of target proteins. Confers sensitivity to the virulent bacterial pathogen P.syringae. Auxin receptor that mediates Aux/IAA proteins proteasomal degradation and auxin-regulated transcription. Involved in embryogenesis regulation by auxin. This Arabidopsis thaliana (Mouse-ear cress) protein is Protein AUXIN SIGNALING F-BOX 2 (AFB2).